A 552-amino-acid polypeptide reads, in one-letter code: uncharacterized protein (552 aa).

The next 4 membrane-spanning stretches (helical) occupy residues Ala-127–Leu-147, Leu-160–Ile-180, Leu-393–Val-413, and Val-517–Ile-537.

Its subcellular location is the membrane. This is an uncharacterized protein from Saccharomyces cerevisiae (strain ATCC 204508 / S288c) (Baker's yeast).